Consider the following 182-residue polypeptide: UPF0316 protein BCB4264_A3368 (182 aa).

The next 3 helical transmembrane spans lie at 6 to 26 (LIFV…ILLV), 32 to 52 (SAAG…GIVF), and 58 to 78 (WMNI…GGYI).

Belongs to the UPF0316 family.

It localises to the cell membrane. The protein is UPF0316 protein BCB4264_A3368 of Bacillus cereus (strain B4264).